The following is a 191-amino-acid chain: HTH-type transcriptional regulator SAR0097 (191 aa).

Positions 12 to 74 (AEYNQQIILT…AIMDKKVDQM (63 aa)) constitute an HTH tetR-type domain. A DNA-binding region (H-T-H motif) is located at residues 37 to 56 (KMSDIAKISGVGVGTLYRHF).

This Staphylococcus aureus (strain MRSA252) protein is HTH-type transcriptional regulator SAR0097.